The following is a 293-amino-acid chain: Bis(5'-nucleosyl)-tetraphosphatase, symmetrical (293 aa).

It belongs to the Ap4A hydrolase family.

It catalyses the reaction P(1),P(4)-bis(5'-adenosyl) tetraphosphate + H2O = 2 ADP + 2 H(+). Functionally, hydrolyzes diadenosine 5',5'''-P1,P4-tetraphosphate to yield ADP. This is Bis(5'-nucleosyl)-tetraphosphatase, symmetrical from Pseudomonas fluorescens (strain Pf0-1).